A 120-amino-acid chain; its full sequence is Ribonuclease P protein component 2 (120 aa).

Belongs to the eukaryotic/archaeal RNase P protein component 2 family. As to quaternary structure, consists of a catalytic RNA component and at least 4-5 protein subunits.

The protein resides in the cytoplasm. The enzyme catalyses Endonucleolytic cleavage of RNA, removing 5'-extranucleotides from tRNA precursor.. Functionally, part of ribonuclease P, a protein complex that generates mature tRNA molecules by cleaving their 5'-ends. The protein is Ribonuclease P protein component 2 of Thermococcus gammatolerans (strain DSM 15229 / JCM 11827 / EJ3).